Consider the following 1109-residue polypeptide: Carbamoyl phosphate synthase large chain (1109 aa).

Residues 1 to 402 (MPRRTDLTSV…ALQKAMRSID (402 aa)) form a carboxyphosphate synthetic domain region. Residues arginine 129, arginine 169, glycine 175, glycine 176, glutamate 208, isoleucine 210, glutamate 215, glycine 241, valine 242, histidine 243, glutamine 285, and glutamate 299 each coordinate ATP. One can recognise an ATP-grasp 1 domain in the interval 133 to 328 (KGVVERCGAE…IAKIAARLAV (196 aa)). The Mg(2+) site is built by glutamine 285, glutamate 299, and asparagine 301. Glutamine 285, glutamate 299, and asparagine 301 together coordinate Mn(2+). The oligomerization domain stretch occupies residues 403–548 (KAGSTFHWRG…YHYSSYDAET (146 aa)). Residues 549-956 (EVQPRDRPAV…AFAKSQAAAY (408 aa)) are carbamoyl phosphate synthetic domain. The region spanning 678 to 876 (GEVLVAAGLP…LAKAASLLMA (199 aa)) is the ATP-grasp 2 domain. ATP-binding residues include arginine 714, arginine 760, leucine 762, glutamate 767, glycine 792, isoleucine 793, histidine 794, serine 795, glutamine 835, and glutamate 847. Mg(2+) is bound by residues glutamine 835, glutamate 847, and asparagine 849. Glutamine 835, glutamate 847, and asparagine 849 together coordinate Mn(2+). Positions 957–1102 (GGLPTSGRVF…QEHDAARAAR (146 aa)) constitute an MGS-like domain. Residues 957 to 1109 (GGLPTSGRVF…AARETEGVHA (153 aa)) are allosteric domain.

It belongs to the CarB family. In terms of assembly, composed of two chains; the small (or glutamine) chain promotes the hydrolysis of glutamine to ammonia, which is used by the large (or ammonia) chain to synthesize carbamoyl phosphate. Tetramer of heterodimers (alpha,beta)4. Mg(2+) is required as a cofactor. The cofactor is Mn(2+).

It carries out the reaction hydrogencarbonate + L-glutamine + 2 ATP + H2O = carbamoyl phosphate + L-glutamate + 2 ADP + phosphate + 2 H(+). The catalysed reaction is hydrogencarbonate + NH4(+) + 2 ATP = carbamoyl phosphate + 2 ADP + phosphate + 2 H(+). The protein operates within amino-acid biosynthesis; L-arginine biosynthesis; carbamoyl phosphate from bicarbonate: step 1/1. It participates in pyrimidine metabolism; UMP biosynthesis via de novo pathway; (S)-dihydroorotate from bicarbonate: step 1/3. In terms of biological role, large subunit of the glutamine-dependent carbamoyl phosphate synthetase (CPSase). CPSase catalyzes the formation of carbamoyl phosphate from the ammonia moiety of glutamine, carbonate, and phosphate donated by ATP, constituting the first step of 2 biosynthetic pathways, one leading to arginine and/or urea and the other to pyrimidine nucleotides. The large subunit (synthetase) binds the substrates ammonia (free or transferred from glutamine from the small subunit), hydrogencarbonate and ATP and carries out an ATP-coupled ligase reaction, activating hydrogencarbonate by forming carboxy phosphate which reacts with ammonia to form carbamoyl phosphate. This chain is Carbamoyl phosphate synthase large chain, found in Beutenbergia cavernae (strain ATCC BAA-8 / DSM 12333 / CCUG 43141 / JCM 11478 / NBRC 16432 / NCIMB 13614 / HKI 0122).